Here is a 124-residue protein sequence, read N- to C-terminus: Large ribosomal subunit protein eL31 (124 aa).

This sequence belongs to the eukaryotic ribosomal protein eL31 family.

The polypeptide is Large ribosomal subunit protein eL31 (RpL31) (Spodoptera frugiperda (Fall armyworm)).